Consider the following 303-residue polypeptide: MALAPTSSAISGSLRSSMLKLLMRLKSRTLATRLRLYEIIIEMQELGITRNEREIFYMDVNVFRTQSVVRRLVSSIASELQISKHDLGVRNTLKGIFIGRLGFVRHHGLGMVEMSSKGGCPQLIPDMSDIAEVLCDYKKTVVVEKDTVLQRIASEIEREKCLEEILFVCGKGYPCKNTVLLLKMIEHKTAVAGLFDLDPFGIHIFCIYKYGSKETPDIRVETIMRIGVCMEDVLEKNAYKDVFVKLNVHDLKMINRLVRFGELSADLLFLRKIDGKVEMEALFSKEPRRLRYFLFRMLERISS.

One can recognise a Topo IIA-type catalytic domain in the interval 1-96 (MALAPTSSAI…LGVRNTLKGI (96 aa)). Tyr-57 acts as the O-(5'-phospho-DNA)-tyrosine intermediate in catalysis. 2 residues coordinate Mg(2+): Glu-144 and Asp-196.

Belongs to the TOP6A family. The cofactor is Mg(2+).

It is found in the nucleus. The catalysed reaction is ATP-dependent breakage, passage and rejoining of double-stranded DNA.. In terms of biological role, required for meiotic recombination. Mediates DNA cleavage that forms the double-strand breaks (DSB) that initiate meiotic recombination. The protein is Probable meiosis-specific protein SPO11 homolog (SPO11) of Encephalitozoon cuniculi (strain GB-M1) (Microsporidian parasite).